Consider the following 368-residue polypeptide: Phospho-N-acetylmuramoyl-pentapeptide-transferase (368 aa).

Transmembrane regions (helical) follow at residues 30–50 (AAAI…IAYL), 72–92 (LPTM…FLWA), 99–119 (VWLV…DDYL), 135–155 (LIGQ…DPSM), 170–190 (LTIN…TAIS), 201–221 (GLAA…AYLA), 238–258 (GGEV…FLWF), 265–286 (IIMG…ALLI), and 345–365 (KIVI…LMTL).

Belongs to the glycosyltransferase 4 family. MraY subfamily. The cofactor is Mg(2+).

The protein localises to the cell inner membrane. It carries out the reaction UDP-N-acetyl-alpha-D-muramoyl-L-alanyl-gamma-D-glutamyl-meso-2,6-diaminopimeloyl-D-alanyl-D-alanine + di-trans,octa-cis-undecaprenyl phosphate = di-trans,octa-cis-undecaprenyl diphospho-N-acetyl-alpha-D-muramoyl-L-alanyl-D-glutamyl-meso-2,6-diaminopimeloyl-D-alanyl-D-alanine + UMP. The protein operates within cell wall biogenesis; peptidoglycan biosynthesis. Its function is as follows. Catalyzes the initial step of the lipid cycle reactions in the biosynthesis of the cell wall peptidoglycan: transfers peptidoglycan precursor phospho-MurNAc-pentapeptide from UDP-MurNAc-pentapeptide onto the lipid carrier undecaprenyl phosphate, yielding undecaprenyl-pyrophosphoryl-MurNAc-pentapeptide, known as lipid I. The chain is Phospho-N-acetylmuramoyl-pentapeptide-transferase from Chlorobium chlorochromatii (strain CaD3).